A 420-amino-acid chain; its full sequence is UDP-N-acetylglucosamine 1-carboxyvinyltransferase (420 aa).

22–23 contacts phosphoenolpyruvate; it reads KN. Residue arginine 95 coordinates UDP-N-acetyl-alpha-D-glucosamine. Cysteine 119 serves as the catalytic Proton donor. Residue cysteine 119 is modified to 2-(S-cysteinyl)pyruvic acid O-phosphothioketal. UDP-N-acetyl-alpha-D-glucosamine-binding positions include 124–128, aspartate 307, and isoleucine 329; that span reads RPIDQ.

It belongs to the EPSP synthase family. MurA subfamily.

Its subcellular location is the cytoplasm. The enzyme catalyses phosphoenolpyruvate + UDP-N-acetyl-alpha-D-glucosamine = UDP-N-acetyl-3-O-(1-carboxyvinyl)-alpha-D-glucosamine + phosphate. It functions in the pathway cell wall biogenesis; peptidoglycan biosynthesis. In terms of biological role, cell wall formation. Adds enolpyruvyl to UDP-N-acetylglucosamine. This is UDP-N-acetylglucosamine 1-carboxyvinyltransferase from Myxococcus xanthus (strain DK1622).